The primary structure comprises 1463 residues: Secretory phospholipase A2 receptor (1463 aa).

A signal peptide spans 1-20 (MLLSPSLLLLLLLGAPRGCA). At 21-1397 (EGVAAALTPE…ALPEKGPSHS (1377 aa)) the chain is on the extracellular side. The region spanning 38 to 161 (KGIFVIQSES…GSGGGDICEY (124 aa)) is the Ricin B-type lectin domain. 14 cysteine pairs are disulfide-bonded: Cys-51–Cys-64, Cys-89–Cys-106, Cys-178–Cys-204, Cys-192–Cys-219, Cys-260–Cys-354, Cys-330–Cys-346, Cys-406–Cys-501, Cys-478–Cys-493, Cys-617–Cys-634, Cys-699–Cys-796, Cys-774–Cys-788, Cys-840–Cys-937, Cys-914–Cys-929, and Cys-1067–Cys-1087. The N-linked (GlcNAc...) asparagine glycan is linked to Asn-93. Residues 173-221 (THGMPCMFPFQYNHQWHHECTREGREDDLLWCATTSRYERDEKWGFCPD) form the Fibronectin type-II domain. C-type lectin domains follow at residues 238 to 355 (NSHI…YICK), 385 to 502 (YNRN…YICK), 522 to 643 (HGGF…MSLC), 673 to 797 (GLAS…WICK), 819 to 938 (YQDA…SICK), 965 to 1096 (FNYK…GFVC), 1121 to 1232 (YGNR…GAIC), and 1257 to 1378 (FKSN…FICK). Asn-454 carries an N-linked (GlcNAc...) asparagine glycan. Asn-1123 is a glycosylation site (N-linked (GlcNAc...) asparagine). Cystine bridges form between Cys-1209-Cys-1223, Cys-1280-Cys-1377, and Cys-1354-Cys-1369. A helical membrane pass occupies residues 1398–1418 (IIPLAVVLTLIVIVAICTLSF). At 1419-1463 (CIYKHNGGFFRRLAGFRNPYYPATNFSTVYLEENILISDLEKSDQ) the chain is on the cytoplasmic side. The Endocytosis signal motif lies at 1436–1442 (NPYYPAT).

In terms of assembly, interacts with sPLA2-IB/PLA2G1B; this interaction mediates intracellular signaling as well as clearance of extracellular sPLA2-IB/PLA2G1B via endocytotic pathway. Interacts with sPLA2-X/PLA2G10; this interaction mediates sPLA2-X/PLA2G10 clearance and inactivation. Post-translationally, the secretory phospholipase A2 receptor form may be produced by the action of metalloproteinases. It contains all extracellular domains and only lacks transmembrane and cytosolic regions. It is however unclear whether this form is produced by proteolytic cleavage as suggested by some experiments, or by alternative splicing, as in the case of isoform 2 that shares all characteristics of secretory phospholipase A2 receptor form. Expressed in podocytes (at protein level). Present in lung macrophage (at protein level). Highly expressed in kidney. Also expressed in pancreas, amnion, choriodecidua and placenta. Isoform 2 is expressed at much lower level.

Its subcellular location is the cell membrane. The protein localises to the secreted. Receptor for secretory phospholipase A2 (sPLA2). Acts as a receptor for phospholipase sPLA2-IB/PLA2G1B but not sPLA2-IIA/PLA2G2A. Also able to bind to snake PA2-like toxins. Although its precise function remains unclear, binding of sPLA2 to its receptor participates in both positive and negative regulation of sPLA2 functions as well as clearance of sPLA2. Binding of sPLA2-IB/PLA2G1B induces various effects depending on the cell type, such as activation of the mitogen-activated protein kinase (MAPK) cascade to induce cell proliferation, the production of lipid mediators, selective release of arachidonic acid in bone marrow-derived mast cells. In neutrophils, binding of sPLA2-IB/PLA2G1B can activate p38 MAPK to stimulate elastase release and cell adhesion. May be involved in responses in pro-inflammatory cytokine productions during endotoxic shock. Also has endocytic properties and rapidly internalizes sPLA2 ligands, which is particularly important for the clearance of extracellular sPLA2s to protect their potent enzymatic activities. The soluble secretory phospholipase A2 receptor form is circulating and acts as a negative regulator of sPLA2 functions by blocking the biological functions of sPLA2-IB/PLA2G1B. In podocytes, binding of sPLA2-IB/PLA2G1B can regulate podocyte survival and glomerular homeostasis. The chain is Secretory phospholipase A2 receptor (PLA2R1) from Homo sapiens (Human).